The following is a 443-amino-acid chain: MFLAQEIIRKKRNAETLSTEEIQFFVKGITNNTVSEGQIAALGMAVYFNDMNMDERIALTTAMRDSGTVLNWQSLDLNGPIIDKHSTGGVGDVISLMLGPMAAACGGYVPMISGRGLGHTGGTLDKFDAIPGYNTEPDSALFRKVVKEAGVAIIGQTGDLVPADKRFYSIRDNTATVESISLITASILSKKLAAGLDALAMDVKVGTGAFMPTYEASEELARSITAVANGAGTKTTALLTDMNQVLASCAGNALEVKEAVDFMTGAYRNPRLYEVTMGLCAEMLVLGGLASNESEARVKLNTVLDNGKAAEIFGRMVSGLGGPADFVENYSKYLPDSQIIRPVYADRSGFASAMDTRELGLAVVTLGGGRRKPGDALDYSVGLSKVCALGDEINPEQPIAFIHAQSESAFAEAEAAVKKAIHIGDSKPEKTPEIYRYIRESDL.

It belongs to the thymidine/pyrimidine-nucleoside phosphorylase family. In terms of assembly, homodimer.

It carries out the reaction thymidine + phosphate = 2-deoxy-alpha-D-ribose 1-phosphate + thymine. Its pathway is pyrimidine metabolism; dTMP biosynthesis via salvage pathway; dTMP from thymine: step 1/2. Its function is as follows. The enzymes which catalyze the reversible phosphorolysis of pyrimidine nucleosides are involved in the degradation of these compounds and in their utilization as carbon and energy sources, or in the rescue of pyrimidine bases for nucleotide synthesis. The polypeptide is Thymidine phosphorylase (Shewanella pealeana (strain ATCC 700345 / ANG-SQ1)).